The primary structure comprises 315 residues: Iron(3+)-hydroxamate-binding protein FhuD (315 aa).

Positions 1-23 (MTHIYKKLGAAFFALLLIAALAA) are cleaved as a signal peptide. Cys-24 carries the N-palmitoyl cysteine lipid modification. Cys-24 is lipidated: S-diacylglycerol cysteine. Residues 60–315 (RVVVMADGYY…LEFITESLTK (256 aa)) form the Fe/B12 periplasmic-binding domain.

This sequence belongs to the bacterial solute-binding protein 8 family. The complex is composed of an ATP-binding protein (FhuC), two transmembrane proteins (FhuB and FhuG) and a solute-binding protein (FhuD or YxeB).

The protein localises to the cell membrane. It localises to the membrane raft. Functionally, part of the ABC transporter complex FhuCBGD involved in iron(3+)-hydroxamate import. Binds the iron(3+)-hydroxamate complex and transfers it to the membrane-bound permease. Required for the transport of ferrichrome and coprogen. The protein is Iron(3+)-hydroxamate-binding protein FhuD (fhuD) of Bacillus subtilis (strain 168).